A 119-amino-acid chain; its full sequence is Large ribosomal subunit protein bL20 (119 aa).

Belongs to the bacterial ribosomal protein bL20 family.

Binds directly to 23S ribosomal RNA and is necessary for the in vitro assembly process of the 50S ribosomal subunit. It is not involved in the protein synthesizing functions of that subunit. This chain is Large ribosomal subunit protein bL20, found in Nitrobacter winogradskyi (strain ATCC 25391 / DSM 10237 / CIP 104748 / NCIMB 11846 / Nb-255).